Reading from the N-terminus, the 117-residue chain is Galanin-like peptide (117 aa).

Residues 1–23 (MACSVHLVLFLTILLSLAETPES) form the signal peptide. Residues 86-117 (TMGETFVKANTGDMHILDKNVPKEEATLDSES) constitute a propeptide that is removed on maturation.

It belongs to the galanin family. Isoform 2 is found in brain, thymus and skin. Isoform 2 is found in the skin, in pericytes covering microvascular arterioles and venules on their abluminal surfaces. In larger vessels, isoform 2 is expressed in layers of smooth muscle cells. Isoform 2 is not detected in endothelial cells.

It localises to the secreted. Hypothalamic neuropeptide which binds to the G-protein-coupled galanin receptors (GALR1, GALR2 and GALR3). Involved in a large number of putative physiological functions in CNS homeostatic processes, including the regulation of gonadotropin-releasing hormone secretion. Functionally, exhibits antimicrobial activity against Gram-negative bacterias, inducing bacterial membrane blebbing. Exhibits potent and dose-dependent vasoconstrictor and anti-edema activity in the cutaneous microvasculature, a physiologic effects which does not appear to be mediated via GALR1 or GALR2. The chain is Galanin-like peptide (Galp) from Mus musculus (Mouse).